The chain runs to 323 residues: Lipoyl synthase (323 aa).

A compositionally biased stretch (basic and acidic residues) spans 1-14; that stretch reads MVTILDRTKPDDKR. Positions 1 to 25 are disordered; it reads MVTILDRTKPDDKRIRHPEKAHKPD. [4Fe-4S] cluster is bound by residues C61, C66, C72, C87, C91, C94, and S300. Residues 73–289 enclose the Radical SAM core domain; that stretch reads WEKKHATFMI…EDIAYTKGFL (217 aa).

Belongs to the radical SAM superfamily. Lipoyl synthase family. [4Fe-4S] cluster is required as a cofactor.

Its subcellular location is the cytoplasm. It carries out the reaction [[Fe-S] cluster scaffold protein carrying a second [4Fe-4S](2+) cluster] + N(6)-octanoyl-L-lysyl-[protein] + 2 oxidized [2Fe-2S]-[ferredoxin] + 2 S-adenosyl-L-methionine + 4 H(+) = [[Fe-S] cluster scaffold protein] + N(6)-[(R)-dihydrolipoyl]-L-lysyl-[protein] + 4 Fe(3+) + 2 hydrogen sulfide + 2 5'-deoxyadenosine + 2 L-methionine + 2 reduced [2Fe-2S]-[ferredoxin]. It functions in the pathway protein modification; protein lipoylation via endogenous pathway; protein N(6)-(lipoyl)lysine from octanoyl-[acyl-carrier-protein]: step 2/2. Catalyzes the radical-mediated insertion of two sulfur atoms into the C-6 and C-8 positions of the octanoyl moiety bound to the lipoyl domains of lipoate-dependent enzymes, thereby converting the octanoylated domains into lipoylated derivatives. The chain is Lipoyl synthase from Allorhizobium ampelinum (strain ATCC BAA-846 / DSM 112012 / S4) (Agrobacterium vitis (strain S4)).